A 538-amino-acid chain; its full sequence is Translation initiation factor IF-3, chloroplastic (538 aa).

The N-terminal 140 residues, 1–140 (MVRSSCLQCD…VTQRKEIAVF (140 aa)), are a transit peptide targeting the chloroplast. The head stretch occupies residues 141-290 (SASGQAAEPE…EEVEEEQEVL (150 aa)). Disordered regions lie at residues 146–165 (AAEPEGAEPLKRPFPSPAAK) and 188–210 (RTDSTYGRGPRSTSFTDISNWPS). Residues 291-474 (SWADRRRALA…LILNLAPAGE (184 aa)) form an IF-3 like region. Residues 484–538 (AERDRKAAAEEEGEGDDLDFVDENEDEDVEGEGEEEEAEELEEETAEGTEVPTRS) form a disordered region. Residues 493 to 530 (EEEGEGDDLDFVDENEDEDVEGEGEEEEAEELEEETAE) show a composition bias toward acidic residues.

Belongs to the IF-3 family. Monomer. The N-terminus is blocked.

It localises to the plastid. It is found in the chloroplast. In terms of biological role, involved in chloroplast protein synthesis. It enhances the poly(A,U,G)-dependent binding of the initiator tRNA to chloroplast 30S subunits. In Euglena gracilis, this protein is Translation initiation factor IF-3, chloroplastic.